The sequence spans 378 residues: Queuine tRNA-ribosyltransferase (378 aa).

Catalysis depends on aspartate 92, which acts as the Proton acceptor. Substrate is bound by residues 92-96 (DSGGF), aspartate 146, glutamine 188, and glycine 215. Positions 246 to 252 (GVGTHLE) are RNA binding. Aspartate 265 (nucleophile) is an active-site residue. The tract at residues 270-274 (TRLAR) is RNA binding; important for wobble base 34 recognition. Zn(2+)-binding residues include cysteine 303, cysteine 305, cysteine 308, and histidine 334.

It belongs to the queuine tRNA-ribosyltransferase family. In terms of assembly, homodimer. Within each dimer, one monomer is responsible for RNA recognition and catalysis, while the other monomer binds to the replacement base PreQ1. The cofactor is Zn(2+).

The catalysed reaction is 7-aminomethyl-7-carbaguanine + guanosine(34) in tRNA = 7-aminomethyl-7-carbaguanosine(34) in tRNA + guanine. It participates in tRNA modification; tRNA-queuosine biosynthesis. Its function is as follows. Catalyzes the base-exchange of a guanine (G) residue with the queuine precursor 7-aminomethyl-7-deazaguanine (PreQ1) at position 34 (anticodon wobble position) in tRNAs with GU(N) anticodons (tRNA-Asp, -Asn, -His and -Tyr). Catalysis occurs through a double-displacement mechanism. The nucleophile active site attacks the C1' of nucleotide 34 to detach the guanine base from the RNA, forming a covalent enzyme-RNA intermediate. The proton acceptor active site deprotonates the incoming PreQ1, allowing a nucleophilic attack on the C1' of the ribose to form the product. After dissociation, two additional enzymatic reactions on the tRNA convert PreQ1 to queuine (Q), resulting in the hypermodified nucleoside queuosine (7-(((4,5-cis-dihydroxy-2-cyclopenten-1-yl)amino)methyl)-7-deazaguanosine). This chain is Queuine tRNA-ribosyltransferase, found in Thermosynechococcus vestitus (strain NIES-2133 / IAM M-273 / BP-1).